We begin with the raw amino-acid sequence, 163 residues long: Lysosomal enzyme trafficking factor (163 aa).

The next 2 helical transmembrane spans lie at 40-60 (MGWI…YYVF) and 98-118 (LPFW…FLFL).

This sequence belongs to the LYSET family. As to quaternary structure, interacts with GNPTAB; this interaction is important for proper localization of GNPTAB in Golgi stacks. Interacts with MBTPS1.

Its subcellular location is the golgi apparatus membrane. In terms of biological role, required for mannose-6-phosphate-dependent trafficking of lysosomal enzymes. LYSET bridges GlcNAc-1-phosphate transferase (GNPTAB), to the membrane-bound transcription factor site-1 protease (MBTPS1), thus allowing proteolytic activation of the GNPTAB. GNPTAB is involved in the regulation of M6P-dependent Golgi-to-lysosome trafficking of lysosomal enzymes. LYSET is thus an essential factor for maturation and delivery of lysosomal hydrolases. Functionally, (Microbial infection) Essential for infection by muliple viruses, including SARS-CoV-2, that utilize activated cathepsins for entry after M6P-dependent lysosomal transport. The polypeptide is Lysosomal enzyme trafficking factor (Homo sapiens (Human)).